A 273-amino-acid chain; its full sequence is E3 ubiquitin-protein ligase SDIR1 (273 aa).

Residues methionine 1–arginine 33 lie on the Cytoplasmic side of the membrane. A helical transmembrane segment spans residues proline 34–asparagine 54. The Lumenal portion of the chain corresponds to serine 55–histidine 56. A helical transmembrane segment spans residues glutamine 57–leucine 77. Topologically, residues arginine 78–valine 273 are cytoplasmic. The RING-type; atypical zinc finger occupies cysteine 211–lysine 252.

In terms of assembly, interacts with ATP1/SDIRIP1. In terms of tissue distribution, ubiquitous.

The protein resides in the endoplasmic reticulum membrane. The catalysed reaction is S-ubiquitinyl-[E2 ubiquitin-conjugating enzyme]-L-cysteine + [acceptor protein]-L-lysine = [E2 ubiquitin-conjugating enzyme]-L-cysteine + N(6)-ubiquitinyl-[acceptor protein]-L-lysine.. E3 ubiquitin-protein ligase that acts as a positive regulator of abscisic acid-related stress signal transduction. Interacts with and ubiquitinates ATP1/SDIRIP1 to modulate ATP1/SDIRIP1 stability through the 26S proteasome pathway. Regulates abscisic acid (ABA) and salt stress responses by negatively affecting ATP1/SDIRIP1 stability. The SDIR1-ATP1/SDIRIP1 complex plays an important role in ABA signaling through the ubiquitination pathway. The protein is E3 ubiquitin-protein ligase SDIR1 of Arabidopsis thaliana (Mouse-ear cress).